The chain runs to 416 residues: Serine hydroxymethyltransferase (416 aa).

(6S)-5,6,7,8-tetrahydrofolate contacts are provided by residues Leu-121 and 125–127 (GHL). Lys-229 carries the N6-(pyridoxal phosphate)lysine modification.

It belongs to the SHMT family. As to quaternary structure, homodimer. Pyridoxal 5'-phosphate is required as a cofactor.

The protein resides in the cytoplasm. It catalyses the reaction (6R)-5,10-methylene-5,6,7,8-tetrahydrofolate + glycine + H2O = (6S)-5,6,7,8-tetrahydrofolate + L-serine. Its pathway is one-carbon metabolism; tetrahydrofolate interconversion. It functions in the pathway amino-acid biosynthesis; glycine biosynthesis; glycine from L-serine: step 1/1. Its function is as follows. Catalyzes the reversible interconversion of serine and glycine with tetrahydrofolate (THF) serving as the one-carbon carrier. This reaction serves as the major source of one-carbon groups required for the biosynthesis of purines, thymidylate, methionine, and other important biomolecules. Also exhibits THF-independent aldolase activity toward beta-hydroxyamino acids, producing glycine and aldehydes, via a retro-aldol mechanism. The protein is Serine hydroxymethyltransferase of Azoarcus sp. (strain BH72).